Reading from the N-terminus, the 223-residue chain is Thiamine-phosphate synthase (223 aa).

4-amino-2-methyl-5-(diphosphooxymethyl)pyrimidine contacts are provided by residues 45 to 49 (QYREK) and N77. Mg(2+) contacts are provided by D78 and D97. Position 116 (T116) interacts with 4-amino-2-methyl-5-(diphosphooxymethyl)pyrimidine. A 2-[(2R,5Z)-2-carboxy-4-methylthiazol-5(2H)-ylidene]ethyl phosphate-binding site is contributed by 142–144 (SYT). Position 145 (K145) interacts with 4-amino-2-methyl-5-(diphosphooxymethyl)pyrimidine. Residues G173 and 193 to 194 (VT) contribute to the 2-[(2R,5Z)-2-carboxy-4-methylthiazol-5(2H)-ylidene]ethyl phosphate site.

This sequence belongs to the thiamine-phosphate synthase family. Mg(2+) is required as a cofactor.

It catalyses the reaction 2-[(2R,5Z)-2-carboxy-4-methylthiazol-5(2H)-ylidene]ethyl phosphate + 4-amino-2-methyl-5-(diphosphooxymethyl)pyrimidine + 2 H(+) = thiamine phosphate + CO2 + diphosphate. The enzyme catalyses 2-(2-carboxy-4-methylthiazol-5-yl)ethyl phosphate + 4-amino-2-methyl-5-(diphosphooxymethyl)pyrimidine + 2 H(+) = thiamine phosphate + CO2 + diphosphate. It carries out the reaction 4-methyl-5-(2-phosphooxyethyl)-thiazole + 4-amino-2-methyl-5-(diphosphooxymethyl)pyrimidine + H(+) = thiamine phosphate + diphosphate. Its pathway is cofactor biosynthesis; thiamine diphosphate biosynthesis; thiamine phosphate from 4-amino-2-methyl-5-diphosphomethylpyrimidine and 4-methyl-5-(2-phosphoethyl)-thiazole: step 1/1. Functionally, condenses 4-methyl-5-(beta-hydroxyethyl)thiazole monophosphate (THZ-P) and 2-methyl-4-amino-5-hydroxymethyl pyrimidine pyrophosphate (HMP-PP) to form thiamine monophosphate (TMP). The chain is Thiamine-phosphate synthase from Dictyoglomus thermophilum (strain ATCC 35947 / DSM 3960 / H-6-12).